Here is a 51-residue protein sequence, read N- to C-terminus: Insulin (51 aa).

3 disulfides stabilise this stretch: Cys7–Cys37, Cys19–Cys50, and Cys36–Cys41.

The protein belongs to the insulin family. Heterodimer of a B chain and an A chain linked by two disulfide bonds.

It is found in the secreted. In terms of biological role, insulin decreases blood glucose concentration. It increases cell permeability to monosaccharides, amino acids and fatty acids. It accelerates glycolysis, the pentose phosphate cycle, and glycogen synthesis in liver. In Elephas maximus (Indian elephant), this protein is Insulin (INS).